Consider the following 317-residue polypeptide: Sulfate adenylyltransferase subunit 2 (317 aa).

A compositionally biased stretch (basic and acidic residues) spans 1-10 (MPHTLPETEL). Disordered regions lie at residues 1–21 (MPHTLPETELHNPQSTKPPLD) and 295–317 (RQGRAIDRDQAGSMEKKKREGYF).

This sequence belongs to the PAPS reductase family. CysD subfamily. In terms of assembly, heterodimer composed of CysD, the smaller subunit, and CysN.

It catalyses the reaction sulfate + ATP + H(+) = adenosine 5'-phosphosulfate + diphosphate. It participates in sulfur metabolism; hydrogen sulfide biosynthesis; sulfite from sulfate: step 1/3. Functionally, with CysN forms the ATP sulfurylase (ATPS) that catalyzes the adenylation of sulfate producing adenosine 5'-phosphosulfate (APS) and diphosphate, the first enzymatic step in sulfur assimilation pathway. APS synthesis involves the formation of a high-energy phosphoric-sulfuric acid anhydride bond driven by GTP hydrolysis by CysN coupled to ATP hydrolysis by CysD. The polypeptide is Sulfate adenylyltransferase subunit 2 (cysD) (Rhizobium meliloti (strain 1021) (Ensifer meliloti)).